We begin with the raw amino-acid sequence, 492 residues long: N-succinylglutamate 5-semialdehyde dehydrogenase (492 aa).

Gly-220–Gly-225 lines the NAD(+) pocket. Catalysis depends on residues Glu-243 and Cys-277.

This sequence belongs to the aldehyde dehydrogenase family. AstD subfamily.

It catalyses the reaction N-succinyl-L-glutamate 5-semialdehyde + NAD(+) + H2O = N-succinyl-L-glutamate + NADH + 2 H(+). Its pathway is amino-acid degradation; L-arginine degradation via AST pathway; L-glutamate and succinate from L-arginine: step 4/5. Catalyzes the NAD-dependent reduction of succinylglutamate semialdehyde into succinylglutamate. This chain is N-succinylglutamate 5-semialdehyde dehydrogenase, found in Escherichia coli O6:H1 (strain CFT073 / ATCC 700928 / UPEC).